The chain runs to 358 residues: Phosphoserine aminotransferase (358 aa).

L-glutamate is bound at residue Arg41. Residues 75-76 (AS), Trp100, Thr148, Asp167, and Gln190 contribute to the pyridoxal 5'-phosphate site. An N6-(pyridoxal phosphate)lysine modification is found at Lys191. 233-234 (NT) contributes to the pyridoxal 5'-phosphate binding site.

This sequence belongs to the class-V pyridoxal-phosphate-dependent aminotransferase family. SerC subfamily. Homodimer. Requires pyridoxal 5'-phosphate as cofactor.

The protein localises to the cytoplasm. The catalysed reaction is O-phospho-L-serine + 2-oxoglutarate = 3-phosphooxypyruvate + L-glutamate. It carries out the reaction 4-(phosphooxy)-L-threonine + 2-oxoglutarate = (R)-3-hydroxy-2-oxo-4-phosphooxybutanoate + L-glutamate. Its pathway is amino-acid biosynthesis; L-serine biosynthesis; L-serine from 3-phospho-D-glycerate: step 2/3. It functions in the pathway cofactor biosynthesis; pyridoxine 5'-phosphate biosynthesis; pyridoxine 5'-phosphate from D-erythrose 4-phosphate: step 3/5. Catalyzes the reversible conversion of 3-phosphohydroxypyruvate to phosphoserine and of 3-hydroxy-2-oxo-4-phosphonooxybutanoate to phosphohydroxythreonine. The sequence is that of Phosphoserine aminotransferase from Campylobacter jejuni subsp. jejuni serotype O:2 (strain ATCC 700819 / NCTC 11168).